The chain runs to 202 residues: Small ribosomal subunit protein uS4c (202 aa).

One can recognise an S4 RNA-binding domain in the interval 90–159 (MRLDNIIFRL…TKNYEFSQTY (70 aa)).

Belongs to the universal ribosomal protein uS4 family. As to quaternary structure, part of the 30S ribosomal subunit. Contacts protein S5. The interaction surface between S4 and S5 is involved in control of translational fidelity.

Its subcellular location is the plastid. The protein localises to the chloroplast. In terms of biological role, one of the primary rRNA binding proteins, it binds directly to 16S rRNA where it nucleates assembly of the body of the 30S subunit. With S5 and S12 plays an important role in translational accuracy. The sequence is that of Small ribosomal subunit protein uS4c (rps4) from Huperzia lucidula (Shining clubmoss).